A 200-amino-acid chain; its full sequence is Snake venom metalloproteinase hemorrhagic factor 2 (200 aa).

A Peptidase M12B domain is found at 4–200 (KYIELVVVAD…RKPQCILNKP (197 aa)). A Ca(2+)-binding site is contributed by E7. An N-linked (GlcNAc...) asparagine glycan is attached at N70. D91 serves as a coordination point for Ca(2+). Disulfide bonds link C115-C195, C155-C179, and C157-C162. H140 lines the Zn(2+) pocket. E141 is an active-site residue. Residues H144 and H150 each contribute to the Zn(2+) site. Ca(2+)-binding residues include C195 and N198.

This sequence belongs to the venom metalloproteinase (M12B) family. P-I subfamily. Monomer. Requires Zn(2+) as cofactor. In terms of tissue distribution, expressed by the venom gland.

Its subcellular location is the secreted. In terms of biological role, snake venom zinc metalloproteinase that induces weak hemorrhage and mild myonecrosis. Shows mild myotoxicity by killing myocytes. Also induces edema in the mouse footpad at doses where hemorrhage is absent. In vitro, degrades laminin, fibronectin, and type IV collagen, suggesting this toxin play a role in local tissue damage by degrading extracellular matrix, and possibly by degrading muscle extracellular matrix. Hemorrhage is not due to cytotoxicity towards endothelial cells in culture, and may only play a minor role in local bleeding characteristic of L.muta envenomations. Also induces the synthesis of several endogenous matrix metalloproteinases, which in turn, may participate in extracellular matrix degradation. The polypeptide is Snake venom metalloproteinase hemorrhagic factor 2 (Lachesis muta muta (Bushmaster)).